The sequence spans 100 residues: RxLR effector protein Avrblb2 (100 aa).

The N-terminal stretch at 1–22 (MRSFLYGVLAFAVLARSSAVAA) is a signal peptide. Positions 43-57 (RSLRIEAQEVIQSGR) match the RxLR-dEER motif. Positions 78-82 (RPDIK) match the Calmodulin-binding motif motif.

This sequence belongs to the RxLR effector family. As to quaternary structure, interacts with the host papain-like cysteine protease C14. Interacts with the host calmodulin.

It is found in the secreted. It localises to the host cell membrane. Functionally, secreted effector that acts as an elicitor of hypersensitive response (HR) specifically on plants carrying defense protein Rpi-blb2. Enhances P.infestans colonization of Nicotiana benthamiana leaves. Interacts with, and subsequently prevents secretion into the apoplast of the host papain-like cysteine protease C14, thus promoting virulence by interfering with the execution of host defenses. Associates with calmodulin at the host plasma membrane to interfere with plant defense-associated calcium signaling in hosts. This Phytophthora infestans (strain T30-4) (Potato late blight agent) protein is RxLR effector protein Avrblb2.